A 300-amino-acid chain; its full sequence is CDAN1-interacting nuclease 1 (300 aa).

The protein resides in the nucleus. It is found in the cytoplasm. Functionally, may play a role in erythroid cell differentiation. The sequence is that of CDAN1-interacting nuclease 1 (cdin1) from Danio rerio (Zebrafish).